We begin with the raw amino-acid sequence, 686 residues long: Proprotein convertase subtilisin/kexin type 9 (686 aa).

An N-terminal signal peptide occupies residues 1–28; that stretch reads MGTVSSRRLWWPLPLLLLLLLGPAGTRA. A propeptide spanning residues 29 to 150 is cleaved from the precursor; the sequence is QEDDDDDYEE…IEEDSSVFAQ (122 aa). Tyr-36 carries the sulfotyrosine modification. Ser-45 carries the post-translational modification Phosphoserine. The Inhibitor I9 domain occupies 75–147; the sequence is TYVVVLKEET…VDYIEEDSSV (73 aa). Residues 153–459 enclose the Peptidase S8 domain; the sequence is PWNLERITPA…GWQLFCRTVW (307 aa). Residues Asp-184 and His-224 each act as charge relay system in the active site. Cystine bridges form between Cys-221–Cys-253 and Cys-321–Cys-356. The Charge relay system role is filled by Ser-384. A C-terminal domain region spans residues 448–686; that stretch reads GEGWQLFCRT…CRSQHLAQAS (239 aa). Intrachain disulfides connect Cys-455–Cys-525, Cys-475–Cys-524, and Cys-484–Cys-507. Asn-531 carries an N-linked (GlcNAc...) asparagine glycan. 6 disulfide bridges follow: Cys-532–Cys-599, Cys-550–Cys-598, Cys-560–Cys-586, Cys-606–Cys-677, Cys-624–Cys-676, and Cys-633–Cys-652. Position 686 is a phosphoserine (Ser-686).

It belongs to the peptidase S8 family. In terms of assembly, monomer. Can self-associate to form dimers and higher multimers which may have increased LDLR degrading activity. The precursor protein but not the mature protein may form multimers. Interacts with APOB, VLDLR, LRP8/APOER2 and BACE1. The full-length immature form (pro-PCSK9) interacts with SCNN1A, SCNN1B and SCNN1G. The pro-PCSK9 form (via C-terminal domain) interacts with LDLR. Interacts (via the C-terminal domain) with ANXA2 (via repeat Annexin 1); the interaction inhibits the degradation of LDLR. The cofactor is Ca(2+). Cleavage by furin and PCSK5 generates a truncated inactive protein that is unable to induce LDLR degradation. In terms of processing, undergoes autocatalytic cleavage in the endoplasmic reticulum to release the propeptide from the N-terminus and the cleavage of the propeptide is strictly required for its maturation and activation. The cleaved propeptide however remains associated with the catalytic domain through non-covalent interactions, preventing potential substrates from accessing its active site. As a result, it is secreted from cells as a propeptide-containing, enzymatically inactive protein. Post-translationally, phosphorylation protects the propeptide against proteolysis.

It localises to the cytoplasm. The protein localises to the secreted. The protein resides in the endosome. It is found in the lysosome. Its subcellular location is the cell surface. It localises to the endoplasmic reticulum. The protein localises to the golgi apparatus. Its proteolytic activity is autoinhibited by the non-covalent binding of the propeptide to the catalytic domain. Inhibited by EGTA. Crucial player in the regulation of plasma cholesterol homeostasis. Binds to low-density lipid receptor family members: low density lipoprotein receptor (LDLR), very low density lipoprotein receptor (VLDLR), apolipoprotein E receptor (LRP1/APOER) and apolipoprotein receptor 2 (LRP8/APOER2), and promotes their degradation in intracellular acidic compartments. Acts via a non-proteolytic mechanism to enhance the degradation of the hepatic LDLR through a clathrin LDLRAP1/ARH-mediated pathway. May prevent the recycling of LDLR from endosomes to the cell surface or direct it to lysosomes for degradation. Can induce ubiquitination of LDLR leading to its subsequent degradation. Inhibits intracellular degradation of APOB via the autophagosome/lysosome pathway in a LDLR-independent manner. Involved in the disposal of non-acetylated intermediates of BACE1 in the early secretory pathway. Inhibits epithelial Na(+) channel (ENaC)-mediated Na(+) absorption by reducing ENaC surface expression primarily by increasing its proteasomal degradation. Regulates neuronal apoptosis via modulation of LRP8/APOER2 levels and related anti-apoptotic signaling pathways. The chain is Proprotein convertase subtilisin/kexin type 9 (PCSK9) from Saguinus labiatus (Red-chested mustached tamarin).